A 309-amino-acid polypeptide reads, in one-letter code: Probable manganese-dependent inorganic pyrophosphatase (309 aa).

The Mn(2+) site is built by histidine 9, aspartate 13, aspartate 15, aspartate 75, histidine 97, and aspartate 149.

Belongs to the PPase class C family. Mn(2+) serves as cofactor.

The protein resides in the cytoplasm. The enzyme catalyses diphosphate + H2O = 2 phosphate + H(+). The protein is Probable manganese-dependent inorganic pyrophosphatase of Bacillus cereus (strain G9842).